The following is a 117-amino-acid chain: Small ribosomal subunit protein uS17 (117 aa).

It belongs to the universal ribosomal protein uS17 family. As to quaternary structure, part of the 30S ribosomal subunit.

One of the primary rRNA binding proteins, it binds specifically to the 5'-end of 16S ribosomal RNA. This chain is Small ribosomal subunit protein uS17, found in Methanocaldococcus jannaschii (strain ATCC 43067 / DSM 2661 / JAL-1 / JCM 10045 / NBRC 100440) (Methanococcus jannaschii).